The chain runs to 334 residues: Aspartate carbamoyltransferase catalytic subunit (334 aa).

Carbamoyl phosphate contacts are provided by Arg70 and Thr71. Lys98 contacts L-aspartate. Positions 120, 150, and 153 each coordinate carbamoyl phosphate. Residues Arg183 and Arg239 each contribute to the L-aspartate site. Residues Gly280 and Pro281 each coordinate carbamoyl phosphate.

It belongs to the aspartate/ornithine carbamoyltransferase superfamily. ATCase family. As to quaternary structure, heterododecamer (2C3:3R2) of six catalytic PyrB chains organized as two trimers (C3), and six regulatory PyrI chains organized as three dimers (R2).

The catalysed reaction is carbamoyl phosphate + L-aspartate = N-carbamoyl-L-aspartate + phosphate + H(+). It functions in the pathway pyrimidine metabolism; UMP biosynthesis via de novo pathway; (S)-dihydroorotate from bicarbonate: step 2/3. Catalyzes the condensation of carbamoyl phosphate and aspartate to form carbamoyl aspartate and inorganic phosphate, the committed step in the de novo pyrimidine nucleotide biosynthesis pathway. This chain is Aspartate carbamoyltransferase catalytic subunit, found in Pseudomonas paraeruginosa (strain DSM 24068 / PA7) (Pseudomonas aeruginosa (strain PA7)).